We begin with the raw amino-acid sequence, 220 residues long: Pyrrolidone-carboxylate peptidase 1 (220 aa).

Residues E80, C143, and H172 contribute to the active site.

This sequence belongs to the peptidase C15 family. In terms of assembly, homotetramer.

It is found in the cytoplasm. The enzyme catalyses Release of an N-terminal pyroglutamyl group from a polypeptide, the second amino acid generally not being Pro.. Its function is as follows. Removes 5-oxoproline from various penultimate amino acid residues except L-proline. This Photorhabdus laumondii subsp. laumondii (strain DSM 15139 / CIP 105565 / TT01) (Photorhabdus luminescens subsp. laumondii) protein is Pyrrolidone-carboxylate peptidase 1.